A 155-amino-acid polypeptide reads, in one-letter code: SsrA-binding protein (155 aa).

It belongs to the SmpB family.

It localises to the cytoplasm. Required for rescue of stalled ribosomes mediated by trans-translation. Binds to transfer-messenger RNA (tmRNA), required for stable association of tmRNA with ribosomes. tmRNA and SmpB together mimic tRNA shape, replacing the anticodon stem-loop with SmpB. tmRNA is encoded by the ssrA gene; the 2 termini fold to resemble tRNA(Ala) and it encodes a 'tag peptide', a short internal open reading frame. During trans-translation Ala-aminoacylated tmRNA acts like a tRNA, entering the A-site of stalled ribosomes, displacing the stalled mRNA. The ribosome then switches to translate the ORF on the tmRNA; the nascent peptide is terminated with the 'tag peptide' encoded by the tmRNA and targeted for degradation. The ribosome is freed to recommence translation, which seems to be the essential function of trans-translation. The chain is SsrA-binding protein from Bacillus mycoides (strain KBAB4) (Bacillus weihenstephanensis).